The sequence spans 60 residues: Large ribosomal subunit protein bL32 (60 aa).

Belongs to the bacterial ribosomal protein bL32 family.

The protein is Large ribosomal subunit protein bL32 of Streptococcus suis (strain 05ZYH33).